Here is a 262-residue protein sequence, read N- to C-terminus: Putative protein-methionine-sulfoxide reductase subunit YedZ1 (262 aa).

It belongs to the MsrP family.

Part of the YedY1-YedZ1 system that may repair oxidized proteins containing methionine sulfoxide residues (Met-O). The polypeptide is Putative protein-methionine-sulfoxide reductase subunit YedZ1 (Azospira oryzae (strain ATCC BAA-33 / DSM 13638 / PS) (Dechlorosoma suillum)).